The chain runs to 212 residues: Uracil-DNA glycosylase (212 aa).

Catalysis depends on aspartate 59, which acts as the Proton acceptor.

This sequence belongs to the uracil-DNA glycosylase (UDG) superfamily. UNG family.

It localises to the cytoplasm. It carries out the reaction Hydrolyzes single-stranded DNA or mismatched double-stranded DNA and polynucleotides, releasing free uracil.. Excises uracil residues from the DNA which can arise as a result of misincorporation of dUMP residues by DNA polymerase or due to deamination of cytosine. The polypeptide is Uracil-DNA glycosylase (Ureaplasma urealyticum serovar 10 (strain ATCC 33699 / Western)).